The chain runs to 179 residues: tRNA (cytidine(56)-2'-O)-methyltransferase (179 aa).

Residues L82, 112-116 (GAEKV), and 130-137 (VGNQPHSE) contribute to the S-adenosyl-L-methionine site.

Belongs to the aTrm56 family. Homodimer.

The protein resides in the cytoplasm. It catalyses the reaction cytidine(56) in tRNA + S-adenosyl-L-methionine = 2'-O-methylcytidine(56) in tRNA + S-adenosyl-L-homocysteine + H(+). Specifically catalyzes the AdoMet-dependent 2'-O-ribose methylation of cytidine at position 56 in tRNAs. The protein is tRNA (cytidine(56)-2'-O)-methyltransferase of Methanococcus maripaludis (strain C5 / ATCC BAA-1333).